The primary structure comprises 449 residues: Gamma-glutamyl phosphate reductase (449 aa).

The protein belongs to the gamma-glutamyl phosphate reductase family.

The protein resides in the cytoplasm. The catalysed reaction is L-glutamate 5-semialdehyde + phosphate + NADP(+) = L-glutamyl 5-phosphate + NADPH + H(+). It participates in amino-acid biosynthesis; L-proline biosynthesis; L-glutamate 5-semialdehyde from L-glutamate: step 2/2. Catalyzes the NADPH-dependent reduction of L-glutamate 5-phosphate into L-glutamate 5-semialdehyde and phosphate. The product spontaneously undergoes cyclization to form 1-pyrroline-5-carboxylate. In Methanococcoides burtonii (strain DSM 6242 / NBRC 107633 / OCM 468 / ACE-M), this protein is Gamma-glutamyl phosphate reductase.